The chain runs to 493 residues: Glycerol kinase (493 aa).

Thr-13 contributes to the ADP binding site. Positions 13, 14, and 15 each coordinate ATP. Thr-13 serves as a coordination point for sn-glycerol 3-phosphate. ADP is bound at residue Arg-17. Positions 83, 84, 135, and 244 each coordinate sn-glycerol 3-phosphate. Positions 83, 84, 135, 244, and 245 each coordinate glycerol. Thr-266 and Gly-309 together coordinate ADP. Thr-266, Gly-309, Gln-313, and Gly-410 together coordinate ATP. Residues Gly-410 and Asn-414 each contribute to the ADP site.

Belongs to the FGGY kinase family.

It carries out the reaction glycerol + ATP = sn-glycerol 3-phosphate + ADP + H(+). It participates in polyol metabolism; glycerol degradation via glycerol kinase pathway; sn-glycerol 3-phosphate from glycerol: step 1/1. With respect to regulation, inhibited by fructose 1,6-bisphosphate (FBP). Its function is as follows. Key enzyme in the regulation of glycerol uptake and metabolism. Catalyzes the phosphorylation of glycerol to yield sn-glycerol 3-phosphate. This Shewanella pealeana (strain ATCC 700345 / ANG-SQ1) protein is Glycerol kinase.